A 208-amino-acid chain; its full sequence is Casparian strip membrane protein 2 (208 aa).

The disordered stretch occupies residues 1 to 23; the sequence is MDSKSGRSESAINIPESNSTKHK. Over 1 to 46 the chain is Cytoplasmic; sequence MDSKSGRSESAINIPESNSTKHKSTVVHTATKVAAVAPRGGGWRRG. The span at 8 to 18 shows a compositional bias: polar residues; the sequence is SESAINIPESN. Residues 47–67 traverse the membrane as a helical segment; the sequence is VSIFDFILRICALAAALAATA. Topologically, residues 68–96 are extracellular; the sequence is TMGTTDQTLPFFTQFFQFQASYDDLPAFT. Residues 97-117 form a helical membrane-spanning segment; sequence FFVVANGIASGYLVLSLPFSI. Residues 118–129 are Cytoplasmic-facing; the sequence is ATIVRPHAAAIK. A helical transmembrane segment spans residues 130–150; it reads LLLIIFDTVMVAFTAAAAAAA. The Extracellular segment spans residues 151–184; that stretch reads AAIVYLAHNGNSKTNWFAICQQFNDFCQRVSGAV. Residues 185–205 traverse the membrane as a helical segment; sequence VASFVAAVILIFLVVLSAVAI. The Cytoplasmic portion of the chain corresponds to 206–208; it reads RKH.

This sequence belongs to the Casparian strip membrane proteins (CASP) family. As to quaternary structure, homodimer and heterodimers.

Its subcellular location is the cell membrane. Functionally, regulates membrane-cell wall junctions and localized cell wall deposition. Required for establishment of the Casparian strip membrane domain (CSD) and the subsequent formation of Casparian strips, a cell wall modification of the root endodermis that determines an apoplastic barrier between the intraorganismal apoplasm and the extraorganismal apoplasm and prevents lateral diffusion. This is Casparian strip membrane protein 2 from Triphysaria pusilla (Dwarf owl's-clover).